The chain runs to 103 residues: Large ribosomal subunit protein bL21 (103 aa).

Belongs to the bacterial ribosomal protein bL21 family. As to quaternary structure, part of the 50S ribosomal subunit. Contacts protein L20.

Functionally, this protein binds to 23S rRNA in the presence of protein L20. This chain is Large ribosomal subunit protein bL21, found in Nautilia profundicola (strain ATCC BAA-1463 / DSM 18972 / AmH).